Reading from the N-terminus, the 408-residue chain is Glucose-1-phosphate adenylyltransferase (408 aa).

Alpha-D-glucose 1-phosphate contacts are provided by residues Y100, G165, 180–181, and S198; that span reads EK.

The protein belongs to the bacterial/plant glucose-1-phosphate adenylyltransferase family. As to quaternary structure, homotetramer.

The catalysed reaction is alpha-D-glucose 1-phosphate + ATP + H(+) = ADP-alpha-D-glucose + diphosphate. The protein operates within glycan biosynthesis; glycogen biosynthesis. Involved in the biosynthesis of ADP-glucose, a building block required for the elongation reactions to produce glycogen. Catalyzes the reaction between ATP and alpha-D-glucose 1-phosphate (G1P) to produce pyrophosphate and ADP-Glc. This is Glucose-1-phosphate adenylyltransferase from Cutibacterium acnes (strain DSM 16379 / KPA171202) (Propionibacterium acnes).